The sequence spans 179 residues: Auxin-responsive protein IAA15 (179 aa).

Residues 21-25 carry the EAR-like (transcriptional repression) motif; sequence LTLAL. The PB1 domain maps to 86–173; that stretch reads RKYVKVALDG…SCKRMRLMKT (88 aa).

It belongs to the Aux/IAA family. Homodimers and heterodimers.

The protein localises to the nucleus. In terms of biological role, aux/IAA proteins are short-lived transcriptional factors that function as repressors of early auxin response genes at low auxin concentrations. Repression is thought to result from the interaction with auxin response factors (ARFs), proteins that bind to the auxin-responsive promoter element (AuxRE). Formation of heterodimers with ARF proteins may alter their ability to modulate early auxin response genes expression. The protein is Auxin-responsive protein IAA15 (IAA15) of Arabidopsis thaliana (Mouse-ear cress).